Here is a 308-residue protein sequence, read N- to C-terminus: tRNA dimethylallyltransferase (308 aa).

Position 14 to 21 (14 to 21 (GPTASGKT)) interacts with ATP. 16–21 (TASGKT) contributes to the substrate binding site. 3 interaction with substrate tRNA regions span residues 39 to 42 (DSAL), 163 to 167 (QRLAR), and 244 to 249 (RCVGYR).

It belongs to the IPP transferase family. In terms of assembly, monomer. Mg(2+) serves as cofactor.

It catalyses the reaction adenosine(37) in tRNA + dimethylallyl diphosphate = N(6)-dimethylallyladenosine(37) in tRNA + diphosphate. In terms of biological role, catalyzes the transfer of a dimethylallyl group onto the adenine at position 37 in tRNAs that read codons beginning with uridine, leading to the formation of N6-(dimethylallyl)adenosine (i(6)A). The polypeptide is tRNA dimethylallyltransferase (Shewanella halifaxensis (strain HAW-EB4)).